The sequence spans 185 residues: Potassium-transporting ATPase KdpC subunit (185 aa).

A helical membrane pass occupies residues 14–34 (ALSLLTGVAYPLALTGIAAVI).

It belongs to the KdpC family. The system is composed of three essential subunits: KdpA, KdpB and KdpC.

The protein resides in the cell inner membrane. In terms of biological role, part of the high-affinity ATP-driven potassium transport (or Kdp) system, which catalyzes the hydrolysis of ATP coupled with the electrogenic transport of potassium into the cytoplasm. This subunit acts as a catalytic chaperone that increases the ATP-binding affinity of the ATP-hydrolyzing subunit KdpB by the formation of a transient KdpB/KdpC/ATP ternary complex. This Cereibacter sphaeroides (strain KD131 / KCTC 12085) (Rhodobacter sphaeroides) protein is Potassium-transporting ATPase KdpC subunit.